The chain runs to 465 residues: Gamma-aminobutyric acid receptor subunit rho-2 (465 aa).

A signal peptide spans 1 to 20; sequence MPYFTRLILFLFCLMVLVES. Residues 21–260 lie on the Extracellular side of the membrane; it reads RKPKRKRWTG…LYINFTLRRH (240 aa). Arginine 105 is a 4-aminobutanoate binding site. The N-linked (GlcNAc...) asparagine glycan is linked to asparagine 120. Serine 169 serves as a coordination point for 4-aminobutanoate. Cysteine 178 and cysteine 192 are joined by a disulfide. Glutamate 197 is a 4-aminobutanoate binding site. Asparagine 254 is a glycosylation site (N-linked (GlcNAc...) asparagine). A helical transmembrane segment spans residues 261-281; the sequence is IFFFLLQTYFPATLMVMLSWV. The Cytoplasmic portion of the chain corresponds to 282 to 293; the sequence is SFWIDRRAVPAR. The helical transmembrane segment at 294–314 threads the bilayer; sequence VSLGITTVLTMTTIITGVNAS. The Extracellular segment spans residues 315-325; the sequence is MPRVSYVKAVD. A helical membrane pass occupies residues 326–346; it reads IYLWVSFVFVFLSVLEYAAVN. At 347 to 443 the chain is on the cytoplasmic side; it reads YLTTVQERKE…IFQNTHAIDK (97 aa). A helical membrane pass occupies residues 444–464; that stretch reads YSRLIFPASYIFFNLIYWSVF. A topological domain (extracellular) is located at residue serine 465.

It belongs to the ligand-gated ion channel (TC 1.A.9) family. Gamma-aminobutyric acid receptor (TC 1.A.9.5) subfamily. GABRR2 sub-subfamily. As to quaternary structure, three rho subunits (rho-1/GBRR1, rho-2/GBRR2 and rho-3/GBRR3) coassemble either to form functional homopentamers or heteropentamers. Rho-2 is unable to form a functional homopentamer. Interacts with SQSTM1.

It is found in the postsynaptic cell membrane. The protein localises to the cell membrane. The catalysed reaction is chloride(in) = chloride(out). Rho subunit of the pentameric ligand-gated chloride channels responsible for mediating the effects of gamma-aminobutyric acid (GABA), the major inhibitory neurotransmitter in the brain. Rho-containing GABA-gated chloride channels are a subclass of GABA(A) receptors (GABAARs) entirely composed of rho subunits, where GABA molecules bind at the rho intersubunit interfaces. When activated by GABA, rho-GABAARs selectively allow the flow of chloride anions across the cell membrane down their electrochemical gradient. Rho-2 GABAARs may contribute to the regulation of glial development in the cerebellum by controlling extrasynaptic transmission. Rho-2 GABAARs are also involved in neuronal tonic (extrasynaptic) and phasic (synaptic) transmission in the Purkinje neurons of the cerebellum. Rho-2 GABAARs expressed in retina may play a role in retinal neurotransmission. This Homo sapiens (Human) protein is Gamma-aminobutyric acid receptor subunit rho-2.